A 1471-amino-acid polypeptide reads, in one-letter code: ABC multidrug transporter F (1471 aa).

Polar residues predominate over residues 1 to 19 (MALNSTDNRWSTGEDTPSE). Residues 1–40 (MALNSTDNRWSTGEDTPSEAQLPDGEERLDAAPDEKVTAE) form a disordered region. Asn-4 is a glycosylation site (N-linked (GlcNAc...) asparagine). Over residues 25–40 (GEERLDAAPDEKVTAE) the composition is skewed to basic and acidic residues. Asn-71 and Asn-311 each carry an N-linked (GlcNAc...) asparagine glycan. The region spanning 133-387 (LKVPTMVRQA…FEQLGFQCPE (255 aa)) is the ABC transporter 1 domain. A helical transmembrane segment spans residues 498 to 518 (VTLAMLIGNFFEALIIASIFY). Asn-519 is a glycosylation site (N-linked (GlcNAc...) asparagine). The next 5 helical transmembrane spans lie at 532–552 (ALLFMMVLLNAFASVLEILTL), 578–598 (FIMSLPYKFVNSSLVNLTLYF), 607–627 (GPFFFFLLISTSMMLAMSMFF), 641–661 (LAPSSIILLALVLYTGFTIPV), and 751–771 (IIIAMTVFLAVCHFVTTELVA). The segment at 791–819 (RAKQGQRDEEQPSASAVPSEKYSEAPTPV) is disordered. An ABC transporter 2 domain is found at 829-1071 (FHWEDVCYDV…TLMDYFVRNG (243 aa)). N-linked (GlcNAc...) asparagine glycosylation is present at Asn-842. 865–872 (GVSGAGKT) provides a ligand contact to ATP. 5 consecutive transmembrane segments (helical) span residues 1167 to 1187 (YLYSKAILTVGSSIFIGFSFF), 1201 to 1221 (FGVFVFLFVVIQLIFQIIPTF), 1252 to 1272 (FAWNTIAAVLCFLAWFYPVGL), 1288 to 1308 (LVFLIIWATFLFASSFAHLLI), and 1326 to 1346 (IMMYAFCGILAGPHALPGFWI). N-linked (GlcNAc...) asparagine glycans are attached at residues Asn-1386, Asn-1422, and Asn-1429. Residues 1441 to 1461 (FGLLWVYVAVNTFGAVFLYWL) form a helical membrane-spanning segment.

The protein belongs to the ABC transporter superfamily. ABCG family. PDR (TC 3.A.1.205) subfamily.

Its subcellular location is the cell membrane. It catalyses the reaction fluconazole(in) + ATP + H2O = fluconazole(out) + ADP + phosphate + H(+). The enzyme catalyses itraconazole(in) + ATP + H2O = itraconazole(out) + ADP + phosphate + H(+). Its activity is regulated as follows. The efflux inhibitor FK506 impairs the transport activity. Functionally, pleiotropic ABC efflux transporter that shows a strong substrate specificity for the azole class of drugs such as lotrimazole (CLT), fluconazole (FLC), itraconazole (ITC), ketoconazole (KTC), posaconazole (POS), econazole (ECON), metconazole (MET), miconazole (MCZ), prochloraz (PCLZ), and tebuconazole (TEBZ). The protein is ABC multidrug transporter F of Aspergillus fumigatus (strain ATCC MYA-4609 / CBS 101355 / FGSC A1100 / Af293) (Neosartorya fumigata).